The primary structure comprises 160 residues: SUMO-conjugating enzyme SCE1 (160 aa).

The residue at position 2 (A2) is an N-acetylalanine. The UBC core domain occupies 5 to 158 (IARGRLAEER…VKLQSKQYPA (154 aa)). The Glycyl thioester intermediate role is filled by C94.

The protein belongs to the ubiquitin-conjugating enzyme family. Interacts with SIZ1 (via PHD domain) and MMS21. Interacts with TCP14 and TCP15. Interacts with KIN10.

The protein operates within protein modification; protein sumoylation. Functionally, SUMO-conjugating enzyme that accepts the SUMO proteins from the E1 SUMO-activating heterodimer SAE1/SAE2 and catalyzes its covalent attachment to other proteins with the E3 SUMO ligases SIZ1 and MMS21. Associates with SIZ1 for sumoylation of the transcription factor GTE3. In Arabidopsis thaliana (Mouse-ear cress), this protein is SUMO-conjugating enzyme SCE1 (SCE1).